A 551-amino-acid chain; its full sequence is BAG family molecular chaperone regulator 8, chloroplastic (551 aa).

A compositionally biased stretch (basic residues) spans methionine 1–histidine 19. The disordered stretch occupies residues methionine 1 to aspartate 46. A chloroplast-targeting transit peptide spans methionine 1–valine 52. Residues histidine 20–histidine 38 are compositionally biased toward polar residues. Positions arginine 131–alanine 160 constitute an IQ domain. Residues valine 147–valine 228 enclose the BAG domain. The disordered stretch occupies residues glycine 246–lysine 281. Over residues serine 256–glutamate 271 the composition is skewed to acidic residues. Serine 332 carries the post-translational modification Phosphoserine. 2 disordered regions span residues aspartate 414–glycine 433 and asparagine 450–proline 551. The span at glycine 479–glutamate 499 shows a compositional bias: basic and acidic residues. Over residues serine 500 to asparagine 513 the composition is skewed to acidic residues. The span at glutamate 522–histidine 534 shows a compositional bias: basic and acidic residues.

Binds to the ATPase domain of HSP70/HSC70 chaperones.

It localises to the plastid. Its subcellular location is the chloroplast. In terms of biological role, co-chaperone that regulates diverse cellular pathways, such as programmed cell death and stress responses. The sequence is that of BAG family molecular chaperone regulator 8, chloroplastic (BAG1) from Arabidopsis thaliana (Mouse-ear cress).